We begin with the raw amino-acid sequence, 193 residues long: Protein CURVATURE THYLAKOID 1D, chloroplastic (193 aa).

The transit peptide at 1 to 51 (MELCTRSTTIITHLPASFNGHGYLAGKSVDRISLPLQRNVASLVLQSRTLR) directs the protein to the chloroplast. Residues 52–117 (CSRKFPGETV…NDIKLDSDKT (66 aa)) lie on the Stromal side of the membrane. The chain crosses the membrane as a helical span at residues 118-138 (YSILLYGSGAIVALYLTSAIV). Residues 139 to 142 (SSLE) are Lumenal-facing. A helical membrane pass occupies residues 143-163 (AIPLFPKLMEVVGLGYTLWFT). At 164–193 (TRYLLFKRNREELKTKVSEIKKQVLGSDSE) the chain is on the stromal side.

This sequence belongs to the CURT family. Homo- and heterodimers and trimers.

The protein resides in the plastid. It is found in the chloroplast thylakoid membrane. Its function is as follows. Determines thylakoid architecture by inducing membrane curvature. In Arabidopsis thaliana (Mouse-ear cress), this protein is Protein CURVATURE THYLAKOID 1D, chloroplastic (CURT1D).